The following is a 90-amino-acid chain: Acylphosphatase (90 aa).

Positions 3–88 (TWHMTAHGRV…GKFEDFDLRP (86 aa)) constitute an Acylphosphatase-like domain. Residues Arg18 and Asn36 contribute to the active site.

Belongs to the acylphosphatase family.

It carries out the reaction an acyl phosphate + H2O = a carboxylate + phosphate + H(+). This is Acylphosphatase (acyP) from Cupriavidus pinatubonensis (strain JMP 134 / LMG 1197) (Cupriavidus necator (strain JMP 134)).